The following is a 455-amino-acid chain: Glutamyl-tRNA reductase (455 aa).

Substrate-binding positions include 49-52 (TCNR), serine 109, 114-116 (EAQ), and glutamine 120. Cysteine 50 acts as the Nucleophile in catalysis. Position 190 to 195 (190 to 195 (GAGAMG)) interacts with NADP(+).

Belongs to the glutamyl-tRNA reductase family. As to quaternary structure, homodimer.

It carries out the reaction (S)-4-amino-5-oxopentanoate + tRNA(Glu) + NADP(+) = L-glutamyl-tRNA(Glu) + NADPH + H(+). It participates in porphyrin-containing compound metabolism; protoporphyrin-IX biosynthesis; 5-aminolevulinate from L-glutamyl-tRNA(Glu): step 1/2. Functionally, catalyzes the NADPH-dependent reduction of glutamyl-tRNA(Glu) to glutamate 1-semialdehyde (GSA). The protein is Glutamyl-tRNA reductase of Salinispora tropica (strain ATCC BAA-916 / DSM 44818 / JCM 13857 / NBRC 105044 / CNB-440).